Reading from the N-terminus, the 1407-residue chain is DNA-directed RNA polymerase subunit beta' (1407 aa).

Residues Cys70, Cys72, Cys85, and Cys88 each contribute to the Zn(2+) site. Residues Asp460, Asp462, and Asp464 each contribute to the Mg(2+) site. Zn(2+)-binding residues include Cys814, Cys888, Cys895, and Cys898.

Belongs to the RNA polymerase beta' chain family. As to quaternary structure, the RNAP catalytic core consists of 2 alpha, 1 beta, 1 beta' and 1 omega subunit. When a sigma factor is associated with the core the holoenzyme is formed, which can initiate transcription. Mg(2+) is required as a cofactor. Requires Zn(2+) as cofactor.

It carries out the reaction RNA(n) + a ribonucleoside 5'-triphosphate = RNA(n+1) + diphosphate. Its function is as follows. DNA-dependent RNA polymerase catalyzes the transcription of DNA into RNA using the four ribonucleoside triphosphates as substrates. This chain is DNA-directed RNA polymerase subunit beta', found in Erwinia tasmaniensis (strain DSM 17950 / CFBP 7177 / CIP 109463 / NCPPB 4357 / Et1/99).